Here is a 380-residue protein sequence, read N- to C-terminus: Putative S-(hydroxymethyl)glutathione dehydrogenase 2 (380 aa).

Residue cysteine 50 coordinates Zn(2+). Histidine 51 contributes to the NAD(+) binding site. Zn(2+)-binding residues include histidine 72, glutamate 73, cysteine 102, cysteine 105, cysteine 108, cysteine 116, and cysteine 179. NAD(+) is bound by residues glycine 204–glycine 209, aspartate 228, and isoleucine 297–valine 299.

It belongs to the zinc-containing alcohol dehydrogenase family. Class-III subfamily. It depends on Zn(2+) as a cofactor.

It catalyses the reaction a primary alcohol + NAD(+) = an aldehyde + NADH + H(+). It carries out the reaction a secondary alcohol + NAD(+) = a ketone + NADH + H(+). The enzyme catalyses S-(hydroxymethyl)glutathione + NADP(+) = S-formylglutathione + NADPH + H(+). The catalysed reaction is S-(hydroxymethyl)glutathione + NAD(+) = S-formylglutathione + NADH + H(+). It catalyses the reaction S-nitrosoglutathione + NADH + H(+) = S-(hydroxysulfenamide)glutathione + NAD(+). In terms of biological role, oxidizes long-chain alcohols and, in the presence of glutathione, is able to oxidize formaldehyde. Also acts as a S-nitroso-glutathione reductase by catalyzing the NADH-dependent reduction of S-nitrosoglutathione, thereby regulating protein S-nitrosylation. This Schizosaccharomyces pombe (strain 972 / ATCC 24843) (Fission yeast) protein is Putative S-(hydroxymethyl)glutathione dehydrogenase 2.